We begin with the raw amino-acid sequence, 194 residues long: Imidazoleglycerol-phosphate dehydratase (194 aa).

This sequence belongs to the imidazoleglycerol-phosphate dehydratase family.

It localises to the cytoplasm. The catalysed reaction is D-erythro-1-(imidazol-4-yl)glycerol 3-phosphate = 3-(imidazol-4-yl)-2-oxopropyl phosphate + H2O. The protein operates within amino-acid biosynthesis; L-histidine biosynthesis; L-histidine from 5-phospho-alpha-D-ribose 1-diphosphate: step 6/9. The polypeptide is Imidazoleglycerol-phosphate dehydratase (Streptococcus mutans serotype c (strain ATCC 700610 / UA159)).